Reading from the N-terminus, the 166-residue chain is HTH-type transcriptional regulator PetP (166 aa).

The HTH marR-type domain occupies 17 to 152 (DEQLRKGIEA…FRQVLEAMMD (136 aa)). The H-T-H motif DNA-binding region spans 66–89 (VTTLISVLGVTKQSLNRVLRTLID).

Its function is as follows. Necessary for photosynthetic and respiratory growth. The protein is HTH-type transcriptional regulator PetP (petP) of Rhodobacter capsulatus (strain ATCC BAA-309 / NBRC 16581 / SB1003).